We begin with the raw amino-acid sequence, 385 residues long: 1-deoxy-D-xylulose 5-phosphate reductoisomerase (385 aa).

Thr13, Gly14, Ser15, Ile16, Asn40, and Asn122 together coordinate NADPH. Residue Lys123 participates in 1-deoxy-D-xylulose 5-phosphate binding. NADPH is bound at residue Glu124. Asp148 is a binding site for Mn(2+). Positions 149, 150, 177, and 200 each coordinate 1-deoxy-D-xylulose 5-phosphate. Glu150 contacts Mn(2+). Gly206 contributes to the NADPH binding site. Residues Ser213, Asn218, Lys219, and Glu222 each contribute to the 1-deoxy-D-xylulose 5-phosphate site. Position 222 (Glu222) interacts with Mn(2+).

Belongs to the DXR family. The cofactor is Mg(2+). It depends on Mn(2+) as a cofactor.

It catalyses the reaction 2-C-methyl-D-erythritol 4-phosphate + NADP(+) = 1-deoxy-D-xylulose 5-phosphate + NADPH + H(+). Its pathway is isoprenoid biosynthesis; isopentenyl diphosphate biosynthesis via DXP pathway; isopentenyl diphosphate from 1-deoxy-D-xylulose 5-phosphate: step 1/6. Catalyzes the NADPH-dependent rearrangement and reduction of 1-deoxy-D-xylulose-5-phosphate (DXP) to 2-C-methyl-D-erythritol 4-phosphate (MEP). This Francisella tularensis subsp. tularensis (strain WY96-3418) protein is 1-deoxy-D-xylulose 5-phosphate reductoisomerase.